A 306-amino-acid polypeptide reads, in one-letter code: Probable histidinol-phosphatase (306 aa).

The protein belongs to the PHP hydrolase family. HisK subfamily.

It catalyses the reaction L-histidinol phosphate + H2O = L-histidinol + phosphate. It participates in amino-acid biosynthesis; L-histidine biosynthesis; L-histidine from 5-phospho-alpha-D-ribose 1-diphosphate: step 8/9. The chain is Probable histidinol-phosphatase from Schizosaccharomyces pombe (strain 972 / ATCC 24843) (Fission yeast).